The following is a 185-amino-acid chain: Ribosome-recycling factor (185 aa).

The protein belongs to the RRF family.

It localises to the cytoplasm. Its function is as follows. Responsible for the release of ribosomes from messenger RNA at the termination of protein biosynthesis. May increase the efficiency of translation by recycling ribosomes from one round of translation to another. The chain is Ribosome-recycling factor from Mycolicibacterium vanbaalenii (strain DSM 7251 / JCM 13017 / BCRC 16820 / KCTC 9966 / NRRL B-24157 / PYR-1) (Mycobacterium vanbaalenii).